The following is a 107-amino-acid chain: Ribonuclease P protein component 4 (107 aa).

Residues C62, C65, C87, and C90 each coordinate Zn(2+).

It belongs to the eukaryotic/archaeal RNase P protein component 4 family. Consists of a catalytic RNA component and at least 4-5 protein subunits. Zn(2+) serves as cofactor.

Its subcellular location is the cytoplasm. It carries out the reaction Endonucleolytic cleavage of RNA, removing 5'-extranucleotides from tRNA precursor.. Its function is as follows. Part of ribonuclease P, a protein complex that generates mature tRNA molecules by cleaving their 5'-ends. The protein is Ribonuclease P protein component 4 of Archaeoglobus fulgidus (strain ATCC 49558 / DSM 4304 / JCM 9628 / NBRC 100126 / VC-16).